A 345-amino-acid chain; its full sequence is Solute carrier family 25 member 43 (345 aa).

3 Solcar repeats span residues 11–100, 104–195, and 199–297; these read TSSQ…IDEL, SQWR…QERH, and TSLQ…LYRN. Transmembrane regions (helical) follow at residues 16-36, 67-87, 109-129, 165-185, 204-224, and 261-281; these read LMCV…LEVV, FWKG…IHLA, IVAG…LEVV, GFSL…AVYI, FING…FETV, and VMAL…YFGL.

It belongs to the mitochondrial carrier (TC 2.A.29) family.

The protein localises to the mitochondrion inner membrane. The polypeptide is Solute carrier family 25 member 43 (slc25a43) (Danio rerio (Zebrafish)).